The chain runs to 145 residues: Cell wall teichoic acid glycosylation protein GtcA (145 aa).

Helical transmembrane passes span 21–41 (IFMY…TFWL), 45–65 (ILNW…VLFA), 91–111 (FFGF…LLIS), and 122–142 (IWTN…IIFK).

Belongs to the GtrA family.

It localises to the cell membrane. Functionally, involved in the decoration of cell wall teichoic acid with galactose and glucose. This chain is Cell wall teichoic acid glycosylation protein GtcA (gtcA), found in Listeria monocytogenes.